Here is a 521-residue protein sequence, read N- to C-terminus: Hyccin (521 aa).

The residue at position 306 (threonine 306) is a Phosphothreonine. Serine 321 carries the phosphoserine modification. Residues 355–373 show a composition bias toward low complexity; that stretch reads AASSTSQSGLSNSSHNCSN. The segment at 355–413 is disordered; it reads AASSTSQSGLSNSSHNCSNKTSVGKNQRRSGGSKAGAKERETAGESCRDHFARKQTQRA. Residues 390–406 are compositionally biased toward basic and acidic residues; that stretch reads GAKERETAGESCRDHFA. Serine 415, serine 422, serine 433, serine 453, and serine 465 each carry phosphoserine.

Belongs to the Hyccin family. In terms of assembly, component of a phosphatidylinositol 4-kinase (PI4K) complex, composed of PI4KA, EFR3 (EFR3A or EFR3B), TTC7 (TTC7A or TTC7B) and HYCC (HYCC1 or HYCC2). Interacts with TTC7 (TTC7A or TTC7B), interaction is direct. Predominantly expressed in the central nervous system, where it is found in neurons but not in myelinating cells. Lower abundance is observed in peripheral neurons, where it is detectable only at early postnatal ages. Expressed in both oligodendrocytes and neurons.

It is found in the cytoplasm. The protein resides in the cytosol. It localises to the cell membrane. In terms of biological role, component of a complex required to localize phosphatidylinositol 4-kinase (PI4K) to the plasma membrane. The complex acts as a regulator of phosphatidylinositol 4-phosphate (PtdIns(4)P) synthesis. HYCC1 plays a key role in oligodendrocytes formation, a cell type with expanded plasma membrane that requires generation of PtdIns(4)P. Its role in oligodendrocytes formation probably explains its importance in myelination of the central and peripheral nervous system. May also have a role in the beta-catenin/Lef signaling pathway. The chain is Hyccin (Hycc1) from Mus musculus (Mouse).